The following is a 102-amino-acid chain: UPF0251 protein ASA_1331 (102 aa).

The protein belongs to the UPF0251 family.

In Aeromonas salmonicida (strain A449), this protein is UPF0251 protein ASA_1331.